A 261-amino-acid polypeptide reads, in one-letter code: Small ribosomal subunit protein uS2 (261 aa).

S2 carries the post-translational modification N-acetylserine. The tract at residues 211-261 (EQNAAEDSKAEDAEEAPVADAEPDWSGETEDVDWAESGATPAAEEAAASNW) is disordered. Residues 222-244 (DAEEAPVADAEPDWSGETEDVDW) show a composition bias toward acidic residues. Low complexity predominate over residues 245-261 (AESGATPAAEEAAASNW).

The protein belongs to the universal ribosomal protein uS2 family. As to quaternary structure, component of the small ribosomal subunit. Mature ribosomes consist of a small (40S) and a large (60S) subunit. The 40S subunit contains about 33 different proteins and 1 molecule of RNA (18S). The 60S subunit contains about 49 different proteins and 3 molecules of RNA (25S, 5.8S and 5S). Interacts with RPS21.

The protein resides in the cytoplasm. In terms of biological role, required for the assembly and/or stability of the 40S ribosomal subunit. Required for the processing of the 20S rRNA-precursor to mature 18S rRNA in a late step of the maturation of 40S ribosomal subunits. This Meyerozyma guilliermondii (strain ATCC 6260 / CBS 566 / DSM 6381 / JCM 1539 / NBRC 10279 / NRRL Y-324) (Yeast) protein is Small ribosomal subunit protein uS2.